Reading from the N-terminus, the 84-residue chain is RNA-binding protein Hfq (84 aa).

The Sm domain occupies 11 to 71 (DTFLNFVRKN…ISTIMPGAPI (61 aa)).

This sequence belongs to the Hfq family. Homohexamer.

Its function is as follows. RNA chaperone that binds small regulatory RNA (sRNAs) and mRNAs to facilitate mRNA translational regulation in response to envelope stress, environmental stress and changes in metabolite concentrations. Also binds with high specificity to tRNAs. The polypeptide is RNA-binding protein Hfq (Beijerinckia indica subsp. indica (strain ATCC 9039 / DSM 1715 / NCIMB 8712)).